A 383-amino-acid polypeptide reads, in one-letter code: S-adenosylmethionine synthase (383 aa).

Histidine 15 contacts ATP. Aspartate 17 is a binding site for Mg(2+). Glutamate 43 contributes to the K(+) binding site. L-methionine is bound by residues glutamate 56 and glutamine 99. The interval 99–109 (QSPDINQGVDR) is flexible loop. Residues 164 to 166 (DAK), 230 to 231 (RF), aspartate 239, 245 to 246 (RK), alanine 262, and lysine 266 each bind ATP. Position 239 (aspartate 239) interacts with L-methionine. Lysine 270 lines the L-methionine pocket.

The protein belongs to the AdoMet synthase family. In terms of assembly, homotetramer; dimer of dimers. Requires Mg(2+) as cofactor. It depends on K(+) as a cofactor.

It is found in the cytoplasm. It carries out the reaction L-methionine + ATP + H2O = S-adenosyl-L-methionine + phosphate + diphosphate. It functions in the pathway amino-acid biosynthesis; S-adenosyl-L-methionine biosynthesis; S-adenosyl-L-methionine from L-methionine: step 1/1. In terms of biological role, catalyzes the formation of S-adenosylmethionine (AdoMet) from methionine and ATP. The overall synthetic reaction is composed of two sequential steps, AdoMet formation and the subsequent tripolyphosphate hydrolysis which occurs prior to release of AdoMet from the enzyme. This is S-adenosylmethionine synthase from Shewanella baltica (strain OS155 / ATCC BAA-1091).